Here is a 171-residue protein sequence, read N- to C-terminus: Small ribosomal subunit protein uS4 (171 aa).

The region spanning 103 to 167 is the S4 RNA-binding domain; that stretch reads RRLQTLVHKR…SPMKKQIEAA (65 aa).

It belongs to the universal ribosomal protein uS4 family. As to quaternary structure, part of the 30S ribosomal subunit. Contacts protein S5. The interaction surface between S4 and S5 is involved in control of translational fidelity.

In terms of biological role, one of the primary rRNA binding proteins, it binds directly to 16S rRNA where it nucleates assembly of the body of the 30S subunit. With S5 and S12 plays an important role in translational accuracy. In Methanothermobacter thermautotrophicus (strain ATCC 29096 / DSM 1053 / JCM 10044 / NBRC 100330 / Delta H) (Methanobacterium thermoautotrophicum), this protein is Small ribosomal subunit protein uS4.